A 299-amino-acid polypeptide reads, in one-letter code: Tyrosine recombinase XerC (299 aa).

Positions 1 to 85 (MERQLDAYCE…AVRGLYHYLN (85 aa)) constitute a Core-binding (CB) domain. Residues 106-285 (RLPKTLDTDR…DFQHLAAVYD (180 aa)) enclose the Tyr recombinase domain. Catalysis depends on residues Arg146, Lys170, His237, Arg240, and His263. Tyr272 (O-(3'-phospho-DNA)-tyrosine intermediate) is an active-site residue.

Belongs to the 'phage' integrase family. XerC subfamily. Forms a cyclic heterotetrameric complex composed of two molecules of XerC and two molecules of XerD.

It localises to the cytoplasm. In terms of biological role, site-specific tyrosine recombinase, which acts by catalyzing the cutting and rejoining of the recombining DNA molecules. The XerC-XerD complex is essential to convert dimers of the bacterial chromosome into monomers to permit their segregation at cell division. It also contributes to the segregational stability of plasmids. This chain is Tyrosine recombinase XerC, found in Pseudomonas fluorescens (strain Pf0-1).